The sequence spans 349 residues: Methylthioribose-1-phosphate isomerase (349 aa).

Substrate contacts are provided by residues 49–51 (RGA), Arg92, and Gln199. Asp240 acts as the Proton donor in catalysis. Residue 250 to 251 (NK) participates in substrate binding.

Belongs to the eIF-2B alpha/beta/delta subunits family. MtnA subfamily.

The enzyme catalyses 5-(methylsulfanyl)-alpha-D-ribose 1-phosphate = 5-(methylsulfanyl)-D-ribulose 1-phosphate. Its pathway is amino-acid biosynthesis; L-methionine biosynthesis via salvage pathway; L-methionine from S-methyl-5-thio-alpha-D-ribose 1-phosphate: step 1/6. Its function is as follows. Catalyzes the interconversion of methylthioribose-1-phosphate (MTR-1-P) into methylthioribulose-1-phosphate (MTRu-1-P). The polypeptide is Methylthioribose-1-phosphate isomerase (Syntrophobacter fumaroxidans (strain DSM 10017 / MPOB)).